Reading from the N-terminus, the 507-residue chain is Dolichyl pyrophosphate Man9GlcNAc2 alpha-1,3-glucosyltransferase (507 aa).

Topologically, residues 1 to 3 (MEK) are cytoplasmic. The chain crosses the membrane as a helical span at residues 4 to 24 (WSLMTITVLLALTVRWTVSLG). The Lumenal portion of the chain corresponds to 25–114 (SYSGAGKPPM…SQSHKLFMRT (90 aa)). Asn59 carries N-linked (GlcNAc...) asparagine glycosylation. The chain crosses the membrane as a helical span at residues 115 to 135 (TVFVADLLIYIPAVILYCCSL). Topologically, residues 136 to 143 (KETSTKKK) are cytoplasmic. The chain crosses the membrane as a helical span at residues 144–164 (VSSALCILLYPGLILIDHGHF). Over 165 to 168 (QYNS) the chain is Lumenal. Residues 169–189 (VSLGFALWGVLCLSYDWDLLG) traverse the membrane as a helical segment. Residues 190-226 (SAAFCLALNYKQMELYHSLPFFCYLLGKCFKKGLKGK) lie on the Cytoplasmic side of the membrane. The chain crosses the membrane as a helical span at residues 227–247 (GLLLLIKLAGTVVASFAVCWL). Residues 248 to 297 (PFCTDVEQIMQVLRRLFPIDRGLFEDKVANIWCSLSVLIKIKNVVSPQTQ) are Lumenal-facing. A helical transmembrane segment spans residues 298 to 318 (LKLSFAVTFLSLLPTCIKLTV). Residues 319–338 (QPSLRGFKLTLVSCALSFFL) are Cytoplasmic-facing. Residues 339 to 359 (FSFQVHEKSILLVSVPVCLII) form a helical membrane-spanning segment. The Lumenal segment spans residues 360-361 (NE). A helical membrane pass occupies residues 362-382 (VPFMATWFLLVSTFSMLPLLL). The Cytoplasmic portion of the chain corresponds to 383–387 (KDGLL). Residues 388–408 (LPYAVTTLAFLSACVASFAIF) form a helical membrane-spanning segment. Residues 409–441 (EKTSAKDLQLKPFSQSLRGYVSWFKLFPKIVRS) lie on the Lumenal side of the membrane. A helical transmembrane segment spans residues 442 to 462 (LFLLSVTLMGVLSVMSAAVHP). Over 463 to 473 (PQRFPDLFPVS) the chain is Cytoplasmic. Residues 474–494 (VSSISCLHFLFFLVYFNVIIL) form a helical membrane-spanning segment. Residues 495-507 (WDSKNSRNQKKVS) are Lumenal-facing.

The protein belongs to the ALG6/ALG8 glucosyltransferase family.

Its subcellular location is the endoplasmic reticulum membrane. It carries out the reaction an alpha-D-Man-(1-&gt;2)-alpha-D-Man-(1-&gt;2)-alpha-D-Man-(1-&gt;3)-[alpha-D-Man-(1-&gt;2)-alpha-D-Man-(1-&gt;3)-[alpha-D-Man-(1-&gt;2)-alpha-D-Man-(1-&gt;6)]-alpha-D-Man-(1-&gt;6)]-beta-D-Man-(1-&gt;4)-beta-D-GlcNAc-(1-&gt;4)-alpha-D-GlcNAc-diphospho-di-trans,poly-cis-dolichol + a di-trans,poly-cis-dolichyl beta-D-glucosyl phosphate = an alpha-D-Glc-(1-&gt;3)-alpha-D-Man-(1-&gt;2)-alpha-D-Man-(1-&gt;2)-alpha-D-Man-(1-&gt;3)-[alpha-D-Man-(1-&gt;2)-alpha-D-Man-(1-&gt;3)-[alpha-D-Man-(1-&gt;2)-alpha-D-Man-(1-&gt;6)]-alpha-D-Man-(1-&gt;6)]-beta-D-Man-(1-&gt;4)-beta-D-GlcNAc-(1-&gt;4)-alpha-D-GlcNAc-diphospho-di-trans,poly-cis-dolichol + a di-trans,poly-cis-dolichyl phosphate + H(+). It functions in the pathway protein modification; protein glycosylation. In terms of biological role, dolichyl pyrophosphate Man9GlcNAc2 alpha-1,3-glucosyltransferase that operates in the biosynthetic pathway of dolichol-linked oligosaccharides, the glycan precursors employed in protein asparagine (N)-glycosylation. The assembly of dolichol-linked oligosaccharides begins on the cytosolic side of the endoplasmic reticulum membrane and finishes in its lumen. The sequential addition of sugars to dolichol pyrophosphate produces dolichol-linked oligosaccharides containing fourteen sugars, including two GlcNAcs, nine mannoses and three glucoses. Once assembled, the oligosaccharide is transferred from the lipid to nascent proteins by oligosaccharyltransferases. In the lumen of the endoplasmic reticulum, adds the first glucose residue from dolichyl phosphate glucose (Dol-P-Glc) onto the lipid-linked oligosaccharide intermediate Man(9)GlcNAc(2)-PP-Dol to produce Glc(1)Man(9)GlcNAc(2)-PP-Dol. Glc(1)Man(9)GlcNAc(2)-PP-Dol is a substrate for ALG8, the following enzyme in the biosynthetic pathway. The chain is Dolichyl pyrophosphate Man9GlcNAc2 alpha-1,3-glucosyltransferase from Gallus gallus (Chicken).